The sequence spans 695 residues: WIIPFIPLPVPILIGAGLILFPTATKSFRRMWAFQSVLLLSIVMIFSIYLSIQQINSSSFSQYVWSWIINNDFSLDFGYLIDPLTSIMXXLITTVGIMVLIYSDNYMAHDQGYLRFFAYMSFFSTSMLGLVTSSNLIQIYIFWELVGLCSYLLIGFWFTRPVAANACQKAFVTNRVGDFGLLLGILGFYWITGSFEFRDLFEIFNNLIYNNEVNFLFVTLCAVLLFVGAVAKSAQFPLHVWLPDAMEGPTPISALIHAATMVAAGIFLVARLLPLFRVIPYIMYLISIIGIITVLLGATLALAQKDIKRGLAYSTMSQLGYMMLALGMGSYRSALFHLITHAYSKALLFLGSGSIIHSMETIVGYSPAKSQNMGLMGGLRKHVPITKITFLLGTLSLCGIPPLACFWSKDEILNDSWLYSPIFAIIAWATAGLTAFYMFRIYLLTFEGHLNVHFQNYGGKHKTPFYSISLWGKNGIKKNSCLLTMNNNESTYFFSKTKYPIDKNERKMTRPFMTIAHFERKAVYSYPYESDNTMLFPIFVLGLFTLFVGSIGIPFNQDGVNLDILSKWLAPSINLLHQKSNNSMDWNEFLKDAVLSVSIAYFGIFIASFLYKPIYSSLKNLELINFFVKKGPKRILWDKIINGIYDWSYNRAYIDAFYTRFLVGGIRGLAEFTHFFDRRVIDGMTNGVGVISFIV.

Transmembrane regions (helical) follow at residues 1-21, 32-52, 81-101, 117-137, 139-159, 177-197, 211-231, 250-270, 278-298, 319-339, 346-366, 388-408, 417-437, 535-555, and 594-614; these read WIIPFIPLPVPILIGAGLILF, WAFQSVLLLSIVMIFSIYLSI, IDPLTSIMXXLITTVGIMVLI, FAYMSFFSTSMLGLVTSSNLI, IYIFWELVGLCSYLLIGFWFT, GDFGLLLGILGFYWITGSFEF, NEVNFLFVTLCAVLLFVGAVA, TPISALIHAATMVAAGIFLVA, VIPYIMYLISIIGIITVLLGA, LGYMMLALGMGSYRSALFHLI, ALLFLGSGSIIHSMETIVGYS, ITFLLGTLSLCGIPPLACFWS, WLYSPIFAIIAWATAGLTAFY, LFPIFVLGLFTLFVGSIGIPF, and VLSVSIAYFGIFIASFLYKPI.

This sequence belongs to the complex I subunit 5 family. As to quaternary structure, NDH is composed of at least 16 different subunits, 5 of which are encoded in the nucleus.

It is found in the plastid. The protein localises to the chloroplast thylakoid membrane. The enzyme catalyses a plastoquinone + NADH + (n+1) H(+)(in) = a plastoquinol + NAD(+) + n H(+)(out). The catalysed reaction is a plastoquinone + NADPH + (n+1) H(+)(in) = a plastoquinol + NADP(+) + n H(+)(out). In terms of biological role, NDH shuttles electrons from NAD(P)H:plastoquinone, via FMN and iron-sulfur (Fe-S) centers, to quinones in the photosynthetic chain and possibly in a chloroplast respiratory chain. The immediate electron acceptor for the enzyme in this species is believed to be plastoquinone. Couples the redox reaction to proton translocation, and thus conserves the redox energy in a proton gradient. The polypeptide is NAD(P)H-quinone oxidoreductase subunit 5, chloroplastic (ndhF) (Capsicum baccatum (Peruvian pepper)).